Here is a 538-residue protein sequence, read N- to C-terminus: Importin subunit alpha-4 (538 aa).

In terms of domain architecture, IBB spans 1–58; it reads MSLRPSTRAELRKKIYKTGVDADEARRRREDNLVEIRKNKREDSLLKKRREGMMLQQQ. ARM repeat units lie at residues 112–152, 155–194, 197–237, 239–278, 281–320, 323–363, 366–405, and 409–448; these read SPPI…NVAS, SDHT…NVAG, PNCR…NFCR, KPPT…YLSD, NDKI…NIVT, DSQT…NITA, KLQI…NATS, and HEQI…NILK.

Belongs to the importin alpha family. As to quaternary structure, forms a complex with importin subunit beta-1. Interacts with A.tumefaciens VirD2 and VirE2.

It localises to the nucleus envelope. Its function is as follows. Binds to conventional NLS motifs and mediates nuclear protein import across the nuclear envelope. Acts as a cellular receptor for the nuclear import of the virD2 protein of Agrobacterium and is essential for Agrobacterium-mediated root transformation. This is Importin subunit alpha-4 from Arabidopsis thaliana (Mouse-ear cress).